Consider the following 368-residue polypeptide: Isocitrate dehydrogenase [NAD] subunit 2, mitochondrial (368 aa).

The N-terminal 14 residues, 1-14, are a transit peptide targeting the mitochondrion; sequence MFRQSIVKQSCRFL. Positions 118, 128, 149, and 236 each coordinate substrate. 3 residues coordinate Mg(2+): Asp236, Asp262, and Asp266.

This sequence belongs to the isocitrate and isopropylmalate dehydrogenases family. As to quaternary structure, octamer of two non-identical subunits IDH1 and IDH2. Requires Mg(2+) as cofactor. The cofactor is Mn(2+).

The protein resides in the mitochondrion. It carries out the reaction D-threo-isocitrate + NAD(+) = 2-oxoglutarate + CO2 + NADH. Functionally, performs an essential role in the oxidative function of the citric acid cycle. This Kluyveromyces lactis (strain ATCC 8585 / CBS 2359 / DSM 70799 / NBRC 1267 / NRRL Y-1140 / WM37) (Yeast) protein is Isocitrate dehydrogenase [NAD] subunit 2, mitochondrial (IDH2).